A 323-amino-acid polypeptide reads, in one-letter code: Formyltetrahydrofolate deformylase 1, mitochondrial (323 aa).

The N-terminal 25 residues, 1 to 25 (MIRRITERASGFAKNIPILKSSRFH), are a transit peptide targeting the mitochondrion. One can recognise an ACT domain in the interval 41–124 (VHVFHCQDAV…SVVRVPSIDP (84 aa)). D267 is an active-site residue.

This sequence belongs to the PurU family. In terms of tissue distribution, expressed in leaves, cotyledons, roots, seeds and flowers.

It is found in the mitochondrion. The catalysed reaction is (6R)-10-formyltetrahydrofolate + H2O = (6S)-5,6,7,8-tetrahydrofolate + formate + H(+). Functionally, deformylase involved in photorespiration. Prevents excessive accumulation of 5-formyl tetrahydrofolate (THF), a potent inhibitor of the Gly decarboxylase/Ser hydroxymethyltransferase complex. This is Formyltetrahydrofolate deformylase 1, mitochondrial (PURU1) from Arabidopsis thaliana (Mouse-ear cress).